The following is a 438-amino-acid chain: MDMLTWAALSADEQKTALQRSPLIGDSGLEQSVRAIVDAVASRGDAAIKEFNQKFDGARLANISSANSDNLRLSEHEIEAASARVSPELKAAIAQAMANIDVFHSAQQFRPIDIETQAGVRCELRSEPIEKVGLYIPGGSAPLISTVLMLALPATIAGCEQRVLVSPPPINDAIVYAANVCGITEIYQVGGAQAIAALAFGTETIPSVDKIFGPGNRYVTEAKRLVSQDGRCTVSIDMPAGPSEVLVIADSDANAQFIAADLLSQAEHGPDSQVILVTDSLPLAQAVNQALKSQLAALPRQEIAATALKGSRTILVKDMQEAALVSNRYGPEHLIIQTRFPREVLNNIRAAGSVFLGAYTPESVGDYASGTNHVLPTYGYSRAVSSLSLADFSRRFTVQELSAKGLLGLGQAVMTLASNELLDAHKNAVAVRLASLKG.

NAD(+) is bound by residues tyrosine 135, glutamine 193, and asparagine 216. Substrate contacts are provided by serine 243, glutamine 265, and histidine 268. Zn(2+) contacts are provided by glutamine 265 and histidine 268. Catalysis depends on proton acceptor residues glutamate 332 and histidine 333. Positions 333, 366, 420, and 425 each coordinate substrate. Aspartate 366 is a binding site for Zn(2+). Histidine 425 provides a ligand contact to Zn(2+).

The protein belongs to the histidinol dehydrogenase family. Zn(2+) is required as a cofactor.

The catalysed reaction is L-histidinol + 2 NAD(+) + H2O = L-histidine + 2 NADH + 3 H(+). It participates in amino-acid biosynthesis; L-histidine biosynthesis; L-histidine from 5-phospho-alpha-D-ribose 1-diphosphate: step 9/9. Its function is as follows. Catalyzes the sequential NAD-dependent oxidations of L-histidinol to L-histidinaldehyde and then to L-histidine. The polypeptide is Histidinol dehydrogenase (Shewanella oneidensis (strain ATCC 700550 / JCM 31522 / CIP 106686 / LMG 19005 / NCIMB 14063 / MR-1)).